The following is a 140-amino-acid chain: Encapsulated ferritin-like protein (140 aa).

A Ca(2+)-binding site is contributed by glutamate 31. Residue glutamate 32 participates in Fe cation binding. Residue glutamate 34 participates in Ca(2+) binding. Residues glutamate 62 and histidine 65 each contribute to the Fe cation site. Positions 100–140 are disordered; it reads ADTAGEGSGGDAAKGATAQGDGSLGIGSLKGEAALARPPRL. The tract at residues 100–140 is targeting peptide; it reads ADTAGEGSGGDAAKGATAQGDGSLGIGSLKGEAALARPPRL.

It belongs to the ferritin-like superfamily. EncFtn family. As to quaternary structure, monomers form antiparallel dimers which assemble in a decameric ring 7 nm in diameter and 4.5 nm thick with a central channel (construct without targeting peptide). Growth in Fe(2+)-rich medium induces oligomerization, the monomer does not bind metals. The target peptide probably extends away from the ring, to allow binding to the interior of the encapsulin nanocompartment shell. Fe(2+) serves as cofactor. Requires Ca(2+) as cofactor.

The protein resides in the encapsulin nanocompartment. The enzyme catalyses 4 Fe(2+) + O2 + 4 H(+) = 4 Fe(3+) + 2 H2O. Ferroxidase activity inhibited by Zn(2+). Mutants at Glu-31, Glu-34 and Trp-38 are also inhibited by Zn(2+). In terms of biological role, cargo protein of a type 1 encapsulin nanocompartment. A ferritin-like ferroxidase that mineralizes iron inside the encapsulin nanocompartment. Converts Fe(2+) to Fe(3+) that is released to the exterior of the decameric complex for deposition in the encapsulin nanocompartment. In solution the decamer binds 10-15 iron cations; in the encapsulin nanocompartment the decamer can bind up to 48 ions, perhaps via its internal channel and on its exterior. The empty encapsulin nanocompartment sequesters about 2200 Fe ions while the cargo-loaded nanocompartment can maximally sequester about 4150 Fe ions. EncFtn retains ferroxidase activity when encapsulated. Flux in the active site di-iron metal center is thought to be controlled by the 'entry site' of the protein, which both attracts metal and controls the rate of iron oxidation. Encapsulation in the nanocompartment does not alter either function of this protein. The sequence is that of Encapsulated ferritin-like protein from Rhodospirillum rubrum (strain ATCC 11170 / ATH 1.1.1 / DSM 467 / LMG 4362 / NCIMB 8255 / S1).